Consider the following 660-residue polypeptide: Bifunctional polymyxin resistance protein ArnA (660 aa).

The interval 1–304 is formyltransferase ArnAFT; that stretch reads MKTVVFAYHD…TLGLVQGSRL (304 aa). 86–88 lines the (6R)-10-formyltetrahydrofolate pocket; the sequence is HLI. Residue H104 is the Proton donor; for formyltransferase activity of the active site. (6R)-10-formyltetrahydrofolate is bound by residues R114 and 136–140; that span reads VKRAD. The tract at residues 314–660 is dehydrogenase ArnADH; it reads RRTRVLILGV…RTVDLTDKPS (347 aa). NAD(+) contacts are provided by residues D347 and 368–369; that span reads DI. UDP-alpha-D-glucuronate is bound by residues A393, Y398, and 432–433; that span reads TS. The active-site Proton acceptor; for decarboxylase activity is the E434. UDP-alpha-D-glucuronate is bound by residues R460, N492, 526–535, and Y613; that span reads KLIDGGKQKR. The active-site Proton donor; for decarboxylase activity is the R619.

In the N-terminal section; belongs to the Fmt family. UDP-L-Ara4N formyltransferase subfamily. It in the C-terminal section; belongs to the NAD(P)-dependent epimerase/dehydratase family. UDP-glucuronic acid decarboxylase subfamily. As to quaternary structure, homohexamer, formed by a dimer of trimers.

The enzyme catalyses UDP-alpha-D-glucuronate + NAD(+) = UDP-beta-L-threo-pentopyranos-4-ulose + CO2 + NADH. It catalyses the reaction UDP-4-amino-4-deoxy-beta-L-arabinose + (6R)-10-formyltetrahydrofolate = UDP-4-deoxy-4-formamido-beta-L-arabinose + (6S)-5,6,7,8-tetrahydrofolate + H(+). It functions in the pathway nucleotide-sugar biosynthesis; UDP-4-deoxy-4-formamido-beta-L-arabinose biosynthesis; UDP-4-deoxy-4-formamido-beta-L-arabinose from UDP-alpha-D-glucuronate: step 1/3. It participates in nucleotide-sugar biosynthesis; UDP-4-deoxy-4-formamido-beta-L-arabinose biosynthesis; UDP-4-deoxy-4-formamido-beta-L-arabinose from UDP-alpha-D-glucuronate: step 3/3. The protein operates within bacterial outer membrane biogenesis; lipopolysaccharide biosynthesis. Bifunctional enzyme that catalyzes the oxidative decarboxylation of UDP-glucuronic acid (UDP-GlcUA) to UDP-4-keto-arabinose (UDP-Ara4O) and the addition of a formyl group to UDP-4-amino-4-deoxy-L-arabinose (UDP-L-Ara4N) to form UDP-L-4-formamido-arabinose (UDP-L-Ara4FN). The modified arabinose is attached to lipid A and is required for resistance to polymyxin and cationic antimicrobial peptides. This chain is Bifunctional polymyxin resistance protein ArnA, found in Escherichia coli (strain SE11).